We begin with the raw amino-acid sequence, 381 residues long: Tumor necrosis factor receptor superfamily member 10B (381 aa).

The N-terminal stretch at 1 to 52 (MEPPGPSTPTASAAARADHYTPGLRPLPKRRLLYSFALLLAVLQAVFVPVTA) is a signal peptide. TNFR-Cys repeat units follow at residues 26-86 (PLPK…GNCK), 87-129 (PCRE…NTVC), and 130-169 (RCKP…NRKC). The Extracellular segment spans residues 53-180 (NPAHNRPAGL…SKTAWASWHK (128 aa)). 7 cysteine pairs are disulfide-bonded: Cys-74/Cys-85, Cys-88/Cys-105, Cys-108/Cys-121, Cys-111/Cys-129, Cys-131/Cys-145, Cys-148/Cys-161, and Cys-151/Cys-169. Residues 181-201 (LGLWIGLLVPVVLLIGALLVW) traverse the membrane as a helical segment. Over 202–381 (KTGAWRQWLL…ETGPGGSQCV (180 aa)) the chain is Cytoplasmic. Residues 228 to 260 (HSSLLDRQTSSTTNDSNHNTEPGKTQKTGKKLL) are disordered. The span at 236–247 (TSSTTNDSNHNT) shows a compositional bias: low complexity. A Death domain is found at 273–356 (KFIFEYCSDI…DAMEKIEDYA (84 aa)). (Microbial infection) N-beta-linked (GlcNAc) arginine glycosylation occurs at Arg-293.

Monomer. Can interact with TRADD and RIPK1. Three TNFRSF10B molecules interact with the TNFSF10 homotrimer. In the absence of stimulation, interacts with BIRC2, DDX3X and GSK3B. The interaction with BIRC2 and DDX3X is further enhanced upon receptor stimulation and accompanied by DDX3X and BIRC2 cleavage. In terms of processing, (Microbial infection) Glycosylated at Arg-293 by S.typhimurium protein Ssek3. As to expression, highly expressed in heart, lung and kidney.

It is found in the membrane. In terms of biological role, receptor for the cytotoxic ligand TNFSF10/TRAIL. The adapter molecule FADD recruits caspase-8 to the activated receptor. The resulting death-inducing signaling complex (DISC) performs caspase-8 proteolytic activation which initiates the subsequent cascade of caspases (aspartate-specific cysteine proteases) mediating apoptosis. Promotes the activation of NF-kappa-B. Essential for ER stress-induced apoptosis. In Mus musculus (Mouse), this protein is Tumor necrosis factor receptor superfamily member 10B (Tnfrsf10b).